Reading from the N-terminus, the 161-residue chain is Thy-1 membrane glycoprotein (161 aa).

Residues 1 to 19 form the signal peptide; that stretch reads MNLAISIALLLTVLQVSRG. At glutamine 20 the chain carries Pyrrolidone carboxylic acid. Residues 20–126 enclose the Ig-like V-type domain; sequence QKVTSLTACL…SQNVTVLRDK (107 aa). 2 cysteine pairs are disulfide-bonded: cysteine 28–cysteine 130 and cysteine 38–cysteine 104. 2 N-linked (GlcNAc...) asparagine glycosylation sites follow: asparagine 42 and asparagine 79. Residue serine 82 is modified to Phosphoserine. Asparagine 119 carries an N-linked (GlcNAc...) asparagine glycan. A lipid anchor (GPI-anchor amidated cysteine; alternate) is attached at cysteine 130. The propeptide at 131-161 is removed in mature form; the sequence is EGISLLAQNTSWLXLLLLSLSLLQATDFMSL. The N-linked (GlcNAc...) asparagine glycan is linked to asparagine 139.

It is found in the cell membrane. May play a role in cell-cell or cell-ligand interactions during synaptogenesis and other events in the brain. The polypeptide is Thy-1 membrane glycoprotein (THY1) (Macaca mulatta (Rhesus macaque)).